The following is a 1032-amino-acid chain: Toll-like receptor 9 (1032 aa).

Positions 1–25 (MGPCRGALHPLSLLVQAAALALALA) are cleaved as a signal peptide. Residues 26–815 (QGTLPAFLPC…QDLRLCLDEA (790 aa)) are Extracellular-facing. Cys-35 and Cys-45 are oxidised to a cystine. Position 47–51 (47–51 (WLFLK)) interacts with DNA. 26 LRR repeats span residues 62–85 (RGNVTSLSLYSNRIHHLHDYDFVH), 87–110 (VHLRRLNLKWNCPPASLSPMHFPC), 122–147 (VPTLEDLNLSYNSITTVPALPSSLVS), 150–166 (LSRTNILVLDPATLAGL), 167–190 (YALRFLFLDGNCYYKNPCQQALQV), 198–221 (LGNLTHLSLKYNNLTVVPRGLPPS), 223–242 (EYLLLSYNHIITLAPEDLAN), 243–268 (LTALRVLDVGGNCRRCDHARNPCREC), 283–306 (LSHLEGLVLRDSSLYSLDPRWFHG), 308–332 (GNLMVLDLSENFLYDCITKTKAFYG), 333–356 (LARLRRLNLSFNYHKKVSFAHLHL), 363–386 (LLSLQELDIHGIFFRSLSKTTLQS), 390–413 (LPMLQRLHLQLNFISQAQLSIFGA), 415–440 (PGLRYVDLSDNRISGAAEPAAATGEV), 472–496 (CRTLNFTLDLSRNNLVTVQPEMFVR), 498–521 (ARLQCLGLSHNSISQAVNGSQFVP), 522–545 (LSNLRVLDLSHNKLDLYHGRSFTE), 547–574 (PRLEALDLSYNSQPFSMRGVGHNLSFVA), 576–600 (LPALRYLSLAHNGIHSRVSQQLRSA), 602–624 (LRALDFSGNTLSQMWAEGDLYLR), 629–652 (LRSLVQLDLSQNRLHTLLPRNLDN), 654–677 (PKSLRLLRLRDNYLAFFNWSSLAL), 678–701 (LPKLEALDLAGNQLKALSNGSLPN), 703–725 (TQLQRLDLSGNSIGFVVPSFFAL), 726–749 (AVRLRELNLSANALKTVEPSWFGS), and 751–774 (AGALKVLDVTANPLHCACGATFVD). N-linked (GlcNAc...) asparagine glycosylation is present at Asn-64. DNA contacts are provided by residues 72–77 (SNRIHH) and 95–109 (KWNCPPASLSPMHFP). A disulfide bridge connects residues Cys-98 and Cys-110. N-linked (GlcNAc...) asparagine glycosylation occurs at Asn-129. DNA-binding positions include Tyr-132, Arg-152, and 179-181 (YYK). Cysteines 178 and 184 form a disulfide. An N-linked (GlcNAc...) asparagine glycan is attached at Asn-200. Position 208 (Tyr-208) interacts with DNA. Asn-210 and Asn-242 each carry an N-linked (GlcNAc...) asparagine glycan. Disulfide bonds link Cys-255–Cys-268 and Cys-258–Cys-265. Cys-258 carries the S-palmitoyl cysteine lipid modification. A DNA-binding site is contributed by Arg-262. Cys-265 carries the S-palmitoyl cysteine lipid modification. Asn-340 is a glycosylation site (N-linked (GlcNAc...) asparagine). Residues Cys-472 and Cys-502 are joined by a disulfide bond. N-linked (GlcNAc...) asparagine glycans are attached at residues Asn-476 and Asn-515. Asn-569 carries an N-linked (GlcNAc...) asparagine glycan. Asn-671, Asn-696, and Asn-701 each carry an N-linked (GlcNAc...) asparagine glycan. N-linked (GlcNAc...) asparagine glycosylation occurs at Asn-733. Intrachain disulfides connect Cys-766/Cys-792 and Cys-768/Cys-811. A helical transmembrane segment spans residues 816–836 (LSWVCFSLSLLAVALSLAVPM). Topologically, residues 837-1032 (LHQLCGWDLW…QNFCRGPTTA (196 aa)) are cytoplasmic. The TIR domain maps to 868–1013 (LAYDAFVVFD…SFWAQLGTAL (146 aa)).

The protein belongs to the Toll-like receptor family. Monomer and homodimer. Exists as a monomer in the absence of unmethylated cytidine-phosphate-guanosine (CpG) ligand. Proteolytic processing of an insertion loop (Z-loop) is required for homodimerization upon binding to the unmethylated CpG ligand leading to its activation. Interacts with MYD88 via their respective TIR domains. Interacts with BTK. Interacts (via transmembrane domain) with UNC93B1. Interacts with CD300LH; the interaction may promote full activation of TLR9-triggered innate responses. Interacts with CNPY3 and HSP90B1; this interaction is required for proper folding in the endoplasmic reticulum. Interacts with SMPDL3B. Interacts with CD82; this interaction is essential for TLR9-dependent myddosome formation in response to CpG stimulation. Activated by proteolytic cleavage of the flexible loop between repeats LRR14 and LRR15 within the ectodomain. Cleavage requires UNC93B1. Proteolytically processed by first removing the majority of the ectodomain by either asparagine endopeptidase (AEP) or a cathepsin followed by a trimming event that is solely cathepsin mediated and required for optimal receptor signaling. Post-translationally, palmitoylated by ZDHHC3 in the Golgi regulates TLR9 trafficking from the Golgi to endosomes. Depalmitoylation by PPT1 controls the release of TLR9 from UNC93B1 in endosomes.

The protein localises to the endoplasmic reticulum membrane. It is found in the endosome. It localises to the lysosome. The protein resides in the cytoplasmic vesicle. Its subcellular location is the phagosome. Its function is as follows. Key component of innate and adaptive immunity. TLRs (Toll-like receptors) control host immune response against pathogens through recognition of molecular patterns specific to microorganisms. TLR9 is a nucleotide-sensing TLR which is activated by unmethylated cytidine-phosphate-guanosine (CpG) dinucleotides. Acts via MYD88 and TRAF6, leading to NF-kappa-B activation, cytokine secretion and the inflammatory response. Upon CpG stimulation, induces B-cell proliferation, activation, survival and antibody production. The polypeptide is Toll-like receptor 9 (TLR9) (Canis lupus familiaris (Dog)).